We begin with the raw amino-acid sequence, 232 residues long: 7-cyano-7-deazaguanine synthase (232 aa).

Residue 8–18 (FSGGQDSTTCL) participates in ATP binding. C189, C198, C201, and C204 together coordinate Zn(2+).

This sequence belongs to the QueC family. Requires Zn(2+) as cofactor.

The catalysed reaction is 7-carboxy-7-deazaguanine + NH4(+) + ATP = 7-cyano-7-deazaguanine + ADP + phosphate + H2O + H(+). Its pathway is purine metabolism; 7-cyano-7-deazaguanine biosynthesis. In terms of biological role, catalyzes the ATP-dependent conversion of 7-carboxy-7-deazaguanine (CDG) to 7-cyano-7-deazaguanine (preQ(0)). This is 7-cyano-7-deazaguanine synthase from Proteus mirabilis (strain HI4320).